A 90-amino-acid polypeptide reads, in one-letter code: Small ribosomal subunit protein uS15c (90 aa).

The protein belongs to the universal ribosomal protein uS15 family. In terms of assembly, part of the 30S ribosomal subunit.

Its subcellular location is the plastid. The protein resides in the chloroplast. The polypeptide is Small ribosomal subunit protein uS15c (rps15) (Manihot esculenta (Cassava)).